The sequence spans 1074 residues: Semaphorin-5A (1074 aa).

Residues 1–22 form the signal peptide; it reads MKGTCVIAWLFSSLGLWRLAHP. The Extracellular portion of the chain corresponds to 23 to 968; sequence EAQGTTQCQR…EEKRCGEFNM (946 aa). In terms of domain architecture, Sema spans 35–484; the sequence is HPVISYKEIG…LREHVVKIPL (450 aa). 2 cysteine pairs are disulfide-bonded: cysteine 104-cysteine 114 and cysteine 131-cysteine 140. N-linked (GlcNAc...) asparagine glycosylation is found at asparagine 142, asparagine 168, asparagine 227, and asparagine 277. Disulfide bonds link cysteine 254–cysteine 357 and cysteine 278–cysteine 320. 3 N-linked (GlcNAc...) asparagine glycosylation sites follow: asparagine 323, asparagine 367, and asparagine 437. 2 disulfide bridges follow: cysteine 487/cysteine 504 and cysteine 496/cysteine 513. 2 N-linked (GlcNAc...) asparagine glycosylation sites follow: asparagine 536 and asparagine 591. TSP type-1 domains lie at 540–593, 595–651, 653–702, 707–765, 784–839, 841–896, and 897–944; these read DGHF…ANCS, NGGW…LLCP, HMFW…NPCP, TTPW…GCST, NGAW…LPCP, DGVW…QPCP, and ESWS…VFDS. 6 disulfide bridges follow: cysteine 607/cysteine 644, cysteine 611/cysteine 650, cysteine 622/cysteine 634, cysteine 665/cysteine 696, cysteine 669/cysteine 701, and cysteine 680/cysteine 686. A glycan (N-linked (GlcNAc...) asparagine) is linked at asparagine 717. Intrachain disulfides connect cysteine 796-cysteine 833, cysteine 800-cysteine 838, cysteine 811-cysteine 823, cysteine 853-cysteine 890, cysteine 857-cysteine 895, and cysteine 868-cysteine 880. A glycan (N-linked (GlcNAc...) asparagine) is linked at asparagine 933. A helical transmembrane segment spans residues 969-989; the sequence is FHMIAVGLSSSILGCLLTLLV. Over 990–1074 the chain is Cytoplasmic; that stretch reads YTYCQRYQQQ…FTDLNNYDEY (85 aa).

Belongs to the semaphorin family. As to quaternary structure, binds PLXNB3.

It is found in the membrane. Bifunctional axonal guidance cue regulated by sulfated proteoglycans; attractive effects result from interactions with heparan sulfate proteoglycans (HSPGs), while the inhibitory effects depend on interactions with chondroitin sulfate proteoglycans (CSPGs). Ligand for receptor PLXNB3. In glioma cells, SEMA5A stimulation of PLXNB3 results in the disassembly of F-actin stress fibers, disruption of focal adhesions and cellular collapse as well as inhibition of cell migration and invasion through ARHGDIA-mediated inactivation of RAC1. May promote angiogenesis by increasing endothelial cell proliferation and migration and inhibiting apoptosis. The polypeptide is Semaphorin-5A (SEMA5A) (Homo sapiens (Human)).